We begin with the raw amino-acid sequence, 173 residues long: Alpha-crystallin A chain (173 aa).

Methionine 1 is subject to N-acetylmethionine. The segment at 1 to 63 (MDIAIQHPWF…RTVLDSGISE (63 aa)) is required for complex formation with BFSP1 and BFSP2. Glutamine 6 is subject to Deamidated glutamine; partial. Serine 45 bears the Phosphoserine mark. Glutamine 50 bears the Deamidated glutamine; partial mark. Residues 52–162 (LFRTVLDSGI…GHSERAIPVS (111 aa)) form the sHSP domain. N6-acetyllysine occurs at positions 70 and 99. Histidine 100 lines the Zn(2+) pocket. A Deamidated asparagine; partial modification is found at asparagine 101. The Zn(2+) site is built by glutamate 102 and histidine 107. At serine 122 the chain carries Phosphoserine. Deamidated asparagine; partial is present on asparagine 123. A disordered region spans residues 144–173 (PKVPSGVDAGHSERAIPVSREEKPSSAPSS). A compositionally biased stretch (basic and acidic residues) spans 153–167 (GHSERAIPVSREEKP). Residue histidine 154 participates in Zn(2+) binding. An O-linked (GlcNAc) serine glycan is attached at serine 162.

It belongs to the small heat shock protein (HSP20) family. As to quaternary structure, heteromer composed of three CRYAA and one CRYAB subunits. Inter-subunit bridging via zinc ions enhances stability, which is crucial as there is no protein turn over in the lens. Can also form homodimers and homotetramers (dimers of dimers) which serve as the building blocks of homooligomers. Within homooligomers, the zinc-binding motif is created from residues of 3 different molecules. His-100 and Glu-102 from one molecule are ligands of the zinc ion, and His-107 and His-154 residues from additional molecules complete the site with tetrahedral coordination geometry. Part of a complex required for lens intermediate filament formation composed of BFSP1, BFSP2 and CRYAA. In terms of processing, acetylation at Lys-70 may increase chaperone activity. Post-translationally, undergoes age-dependent proteolytical cleavage at the C-terminus.

It localises to the cytoplasm. The protein resides in the nucleus. Its function is as follows. Contributes to the transparency and refractive index of the lens. Acts as a chaperone, preventing aggregation of various proteins under a wide range of stress conditions. Required for the correct formation of lens intermediate filaments as part of a complex composed of BFSP1, BFSP2 and CRYAA. The protein is Alpha-crystallin A chain (CRYAA) of Canis lupus familiaris (Dog).